Consider the following 162-residue polypeptide: NADH-quinone oxidoreductase subunit I 2 (162 aa).

4Fe-4S ferredoxin-type domains lie at 53-83 and 93-122; these read LRRY…IESE and TRYD…ETRI. Residues Cys-63, Cys-66, Cys-69, Cys-73, Cys-102, Cys-105, Cys-108, and Cys-112 each coordinate [4Fe-4S] cluster.

This sequence belongs to the complex I 23 kDa subunit family. As to quaternary structure, NDH-1 is composed of 14 different subunits. Subunits NuoA, H, J, K, L, M, N constitute the membrane sector of the complex. [4Fe-4S] cluster serves as cofactor.

The protein localises to the cell inner membrane. The catalysed reaction is a quinone + NADH + 5 H(+)(in) = a quinol + NAD(+) + 4 H(+)(out). Functionally, NDH-1 shuttles electrons from NADH, via FMN and iron-sulfur (Fe-S) centers, to quinones in the respiratory chain. The immediate electron acceptor for the enzyme in this species is believed to be ubiquinone. Couples the redox reaction to proton translocation (for every two electrons transferred, four hydrogen ions are translocated across the cytoplasmic membrane), and thus conserves the redox energy in a proton gradient. The chain is NADH-quinone oxidoreductase subunit I 2 from Nitrosospira multiformis (strain ATCC 25196 / NCIMB 11849 / C 71).